A 473-amino-acid chain; its full sequence is Protein translocase subunit SecD (473 aa).

6 helical membrane-spanning segments follow: residues 5 to 25, 316 to 336, 337 to 357, 364 to 384, 409 to 429, and 436 to 456; these read VLVK…LLYP, ASLY…KSGG, IISN…MAAF, PGIA…VLIL, WSAI…LFQF, and GFAV…VFVT.

Belongs to the SecD/SecF family. SecD subfamily. As to quaternary structure, forms a complex with SecF. Part of the essential Sec protein translocation apparatus which comprises SecA, SecYEG and auxiliary proteins SecDF. Other proteins may also be involved.

It is found in the cell inner membrane. In terms of biological role, part of the Sec protein translocase complex. Interacts with the SecYEG preprotein conducting channel. SecDF uses the proton motive force (PMF) to complete protein translocation after the ATP-dependent function of SecA. The chain is Protein translocase subunit SecD from Elusimicrobium minutum (strain Pei191).